We begin with the raw amino-acid sequence, 818 residues long: H(+)/Cl(-) exchange transporter 3 (818 aa).

Residues Met-1–Ala-125 lie on the Cytoplasmic side of the membrane. 3 consecutive short sequence motifs (di-leucine internalization motif; mediates targeting to late endosome and lysosome membranes) follow at residues Leu-28–Leu-29, Leu-46–Leu-47, and Leu-71–Leu-75. The helical transmembrane segment at Trp-126–Ser-163 threads the bilayer. N-linked (GlcNAc...) asparagine glycosylation occurs at Asn-177. Residues Met-209–Phe-232 traverse the membrane as a helical segment. The short motif at Gly-238–Pro-242 is the Selectivity filter part_1 element. Residue Ser-239 coordinates chloride. Residues Ile-241–Leu-248 constitute an intramembrane region (helical). 2 helical membrane-spanning segments follow: residues Gly-258 to Gly-276 and Glu-282 to Pro-301. The Selectivity filter part_2 motif lies at Gly-280–Pro-284. 2 intramembrane regions (helical) span residues Val-313–Ala-325 and Pro-329–Leu-337. A run of 3 helical transmembrane segments spans residues Leu-349–Asn-367, Phe-391–Arg-416, and Phe-423–Phe-443. 2 N-linked (GlcNAc...) asparagine glycosylation sites follow: Asn-451 and Asn-479. 2 helical membrane passes run Ile-500 to Ile-520 and Gly-525 to Ala-544. Positions Gly-525 to Pro-529 match the Selectivity filter part_3 motif. Position 527 (Phe-527) interacts with chloride. 2 consecutive intramembrane regions (helical) follow at residues Gly-572–Val-586 and Thr-590–Thr-601. Residues Gly-602–Glu-605 constitute an intramembrane region (note=Loop between two helices). The helical transmembrane segment at Tyr-606–Phe-624 threads the bilayer. The Cytoplasmic portion of the chain corresponds to Gly-625 to Asn-818. Tyr-630 serves as a coordination point for chloride. CBS domains follow at residues Met-658–Lys-722 and Leu-755–Pro-812. Residues Tyr-689–Gly-691 and Thr-796–Asp-799 contribute to the ATP site.

The protein belongs to the chloride channel (TC 2.A.49) family. ClC-3/CLCN3 subfamily. As to quaternary structure, monomer and homodimer. Forms heterodimers with CLCN4. In terms of assembly, interacts with GOPC, PDZK1 and NHERF1/EBP50. In terms of processing, N-glycosylated. As to expression, expressed primarily in tissues derived from neuroectoderm. Within the brain, its expression is particularly evident in the hippocampus, olfactory cortex, and olfactory bulb. Highly expressed in aortic and coronary vascular smooth muscle cells, and aortic endothelial cells. Also expressed in tracheal and alveolar epithelial cells, and intima and media of the pulmonary vessels. Expressed in bronchus and colon (at protein level).

It localises to the early endosome membrane. The protein localises to the late endosome membrane. The protein resides in the lysosome membrane. Its subcellular location is the cell membrane. It is found in the golgi apparatus membrane. It localises to the cell projection. The protein localises to the ruffle membrane. Its function is as follows. Strongly outwardly rectifying, electrogenic H(+)/Cl(-)exchanger which mediates the exchange of chloride ions against protons. The CLC channel family contains both chloride channels and proton-coupled anion transporters that exchange chloride or another anion for protons. The presence of conserved gating glutamate residues is typical for family members that function as antiporters. Functionally, strongly outwardly rectifying, electrogenic H(+)/Cl(-)exchanger which mediates the exchange of chloride ions against protons. The chain is H(+)/Cl(-) exchange transporter 3 (CLCN3) from Homo sapiens (Human).